The chain runs to 886 residues: Alanine--tRNA ligase (886 aa).

Residues histidine 568, histidine 572, cysteine 670, and histidine 674 each coordinate Zn(2+).

The protein belongs to the class-II aminoacyl-tRNA synthetase family. Requires Zn(2+) as cofactor.

The protein localises to the cytoplasm. The catalysed reaction is tRNA(Ala) + L-alanine + ATP = L-alanyl-tRNA(Ala) + AMP + diphosphate. Functionally, catalyzes the attachment of alanine to tRNA(Ala) in a two-step reaction: alanine is first activated by ATP to form Ala-AMP and then transferred to the acceptor end of tRNA(Ala). Also edits incorrectly charged Ser-tRNA(Ala) and Gly-tRNA(Ala) via its editing domain. The polypeptide is Alanine--tRNA ligase (Prochlorococcus marinus (strain NATL1A)).